We begin with the raw amino-acid sequence, 302 residues long: Bifunctional protein FolD 2 (302 aa).

NADP(+) contacts are provided by residues 170–172 (GRS), Ser195, and Ile236.

This sequence belongs to the tetrahydrofolate dehydrogenase/cyclohydrolase family. Homodimer.

It carries out the reaction (6R)-5,10-methylene-5,6,7,8-tetrahydrofolate + NADP(+) = (6R)-5,10-methenyltetrahydrofolate + NADPH. The enzyme catalyses (6R)-5,10-methenyltetrahydrofolate + H2O = (6R)-10-formyltetrahydrofolate + H(+). Its pathway is one-carbon metabolism; tetrahydrofolate interconversion. Its function is as follows. Catalyzes the oxidation of 5,10-methylenetetrahydrofolate to 5,10-methenyltetrahydrofolate and then the hydrolysis of 5,10-methenyltetrahydrofolate to 10-formyltetrahydrofolate. The polypeptide is Bifunctional protein FolD 2 (Paracoccus denitrificans (strain Pd 1222)).